A 761-amino-acid polypeptide reads, in one-letter code: uncharacterized protein (761 aa).

TPR repeat units lie at residues Glu-35–Ser-68, Ala-69–Asp-102, Asp-103–Lys-136, Val-137–Phe-170, Glu-172–Asn-203, Glu-204–Asp-237, Leu-351–Ala-384, and Ala-419–Glu-452. The protein sulfotransferase-like stretch occupies residues Lys-487 to Gly-761.

In the C-terminal section; belongs to the protein sulfotransferase family.

This is an uncharacterized protein from Aquifex aeolicus (strain VF5).